An 88-amino-acid polypeptide reads, in one-letter code: U18-hexatoxin-Hi1a (88 aa).

Positions 1–17 (MRIYSLLILSFLLLASA) are cleaved as a signal peptide. Residues 18 to 47 (VLINSAEMPRSEKSLLYSIMQGREDSEEGR) constitute a propeptide that is removed on maturation. 4 cysteine pairs are disulfide-bonded: Cys-48–Cys-63, Cys-55–Cys-69, Cys-62–Cys-81, and Cys-71–Cys-79.

The protein belongs to the neurotoxin 07 (Beta/delta-agtx) family. 02 (aga-3) subfamily. As to expression, expressed by the venom gland.

Its subcellular location is the secreted. Functionally, weak insecticidal toxin with probable ion channel impairing activity. In vivo, induces paralysis when injected into sheep blowflies (L.cuprina). Shows weak toxicity, since it is only toxic at high doses, and flies recover within 24 hours. The chain is U18-hexatoxin-Hi1a from Hadronyche infensa (Fraser island funnel-web spider).